The sequence spans 1387 residues: Collagen-like protein 6 (1387 aa).

A glycan (N-linked (GlcNAc...) asparagine; by host) is linked at Asn-6. 6 Collagen-like domains span residues 95 to 154 (GNNG…KGDI), 161 to 220 (GDKG…KGDN), 266 to 325 (GEKG…KGEM), 344 to 403 (GSKG…KGEK), 450 to 508 (IKGD…KGDI), and 512 to 751 (GEKG…SGSS). Disordered stretches follow at residues 98–219 (GNNG…DKGD), 268–422 (KGEI…QNQG), and 454–753 (KGEK…SSCQ). Basic and acidic residues-rich tracts occupy residues 114–181 (IKGD…KGSK), 189–199 (SKGDNGDKGSK), 207–219 (SKGD…DKGD), 268–340 (KGEI…DGIK), 364–382 (KGDR…KGDN), 390–405 (SKGD…EKGE), 454–535 (KGEK…KGDI), and 544–747 (KGEK…DKGE). Residues Asn-794, Asn-814, Asn-819, Asn-826, Asn-846, Asn-886, Asn-894, Asn-969, Asn-1032, Asn-1077, Asn-1123, Asn-1200, Asn-1224, Asn-1232, and Asn-1233 are each glycosylated (N-linked (GlcNAc...) asparagine; by host).

Post-translationally, may be hydroxylated on lysine by the viral-encoded procollagen-lysine,2-oxoglutarate 5-dioxygenase.

Its subcellular location is the virion. Its function is as follows. May participate in the formation of a layer of cross-linked glycosylated fibrils at the viral surface thus giving it a hairy-like appearance. The polypeptide is Collagen-like protein 6 (Acanthamoeba polyphaga mimivirus (APMV)).